The chain runs to 130 residues: Secreted RxLR effector protein 66 (130 aa).

Positions 1 to 21 are cleaved as a signal peptide; sequence MHLRLLMSTVITATLIVSNNA. A RxLR-dEER motif is present at residues 32-62; that stretch reads RALRGASTVGIAADNLLAAHFSPTLKHKESR. The helical transmembrane segment at 104–124 threads the bilayer; that stretch reads GPAIAIFAGVAATFILIDYLI.

The protein belongs to the RxLR effector family.

It is found in the secreted. The protein resides in the host cytoplasm. The protein localises to the host nucleus. It localises to the membrane. Effector that acts as a broad suppressor of cell death to interrupt plant immunity. Inhibits cell death induced by cell death-inducing proteins, including the PAMP elicitor INF1 from P.infestans. The sequence is that of Secreted RxLR effector protein 66 from Plasmopara viticola (Downy mildew of grapevine).